The sequence spans 306 residues: Pantothenate kinase (306 aa).

91–98 is an ATP binding site; that stretch reads GSVAVGKS.

This sequence belongs to the prokaryotic pantothenate kinase family.

The protein localises to the cytoplasm. It catalyses the reaction (R)-pantothenate + ATP = (R)-4'-phosphopantothenate + ADP + H(+). The protein operates within cofactor biosynthesis; coenzyme A biosynthesis; CoA from (R)-pantothenate: step 1/5. The protein is Pantothenate kinase of Streptococcus pneumoniae (strain Hungary19A-6).